The sequence spans 427 residues: TNF receptor-associated factor family protein DDB_G0285149 (427 aa).

Residues 20 to 65 (CIVCTDLLSESHDKIQVNQCPHGHCLCSDCWTKQIENKKKECPICR) form an RING-type zinc finger. 2 consecutive TRAF-type zinc fingers follow at residues 122–178 (THFK…INKD) and 178–234 (DHLE…KHQA). Residues 284 to 415 (KYSNQWVIEN…GNKLTIKFEI (132 aa)) form the MATH domain.

Belongs to the TNF receptor-associated factor family. A subfamily.

The protein resides in the cytoplasm. Its function is as follows. Probable adapter protein and signal transducer that links members of the tumor necrosis factor receptor family to different signaling pathways by association with the receptor cytoplasmic domain and kinases. This is TNF receptor-associated factor family protein DDB_G0285149 from Dictyostelium discoideum (Social amoeba).